Reading from the N-terminus, the 1041-residue chain is Toll-like receptor 8 (1041 aa).

A signal peptide spans 1–26; it reads MENMFLQSSMLTCIFLLISGSCELCA. At 27–827 the chain is on the extracellular side; it reads EENFSRSYPC…ELTTCVSDVT (801 aa). N29, N42, N80, N88, and N115 each carry an N-linked (GlcNAc...) asparagine glycan. A disulfide bridge links C36 with C49. LRR repeat units follow at residues 126-147, 148-168, 171-193, 202-223, 224-244, and 247-268; these read NLRE…LPES, LTEL…GISR, NLKN…TNIE, NLEL…LPSS, LRKL…DFKG, and NLTL…FPCV. A glycan (N-linked (GlcNAc...) asparagine) is linked at N160. C181 and C187 are disulfide-bonded. N-linked (GlcNAc...) asparagine glycosylation is present at N247. Cystine bridges form between C257–C270 and C260–C267. N285 and N293 each carry an N-linked (GlcNAc...) asparagine glycan. LRR repeat units follow at residues 288–309, 312–334, and 338–360; these read QLRY…WFKN, HLKV…AFLT, and RLEI…INIS. N358 and N362 each carry an N-linked (GlcNAc...) asparagine glycan. LRR repeat units follow at residues 368 to 389, 395 to 416, and 419 to 440; these read SLRA…DFQP, NLST…LFQN, and NLEI…TRQS. N-linked (GlcNAc...) asparagine glycosylation is found at N395 and N416. N443 is a glycosylation site (N-linked (GlcNAc...) asparagine). A disulfide bond links C479 and C509. LRR repeat units lie at residues 482-503, 506-527, 531-551, and 555-577; these read YGKA…QFEN, DIAC…TEFS, HVKY…SALT, and DLEV…THHL. N511 and N546 each carry an N-linked (GlcNAc...) asparagine glycan. N582 and N590 each carry an N-linked (GlcNAc...) asparagine glycan. LRR repeat units lie at residues 585-606, 609-630, 640-661, 665-685, 689-710, 713-734, and 737-758; these read NLKV…YNLE, SLVE…DDNR, NLTR…AFLN, SLTE…TLLQ, RLEL…LSDF, SLRT…FLSE, and SLKH…ALET. 2 N-linked (GlcNAc...) asparagine glycosylation sites follow: N640 and N680. The N-linked (GlcNAc...) asparagine glycan is linked to N752. The region spanning 772–824 is the LRRCT domain; that stretch reads NPFECTCDIGDFRRWMDEHLNVKIPRLVDVICASPGDQRGKSIVSLELTTCVS. C776 and C803 are disulfide-bonded. A helical transmembrane segment spans residues 828–848; it reads AVILFFFTFFITTMVMLAALA. The Cytoplasmic segment spans residues 849–1041; that stretch reads HHLFYWDVWF…NMYVDSIKQY (193 aa). The TIR domain maps to 878–1022; sequence TFYDAYISYD…LFWQTLRNVV (145 aa).

The protein belongs to the Toll-like receptor family. Homodimer. Interacts with MYD88 via their respective TIR domains. Interacts with UNC93B1. Interacts with BTK. Interacts with SMPDL3B. Ubiquitinated by RNF216; leading to degradation by the proteasome. Post-translationally, proteolytic processing occurs in monocytes and monocyte-derived macrophages by both furin-like proprotein convertase and cathepsins. The cleavage is necessary for dimer formation and subsequent activation. As to expression, expressed in myeloid dendritic cells, monocytes, and monocyte-derived dendritic cells.

Its subcellular location is the endosome membrane. Its activity is regulated as follows. Activated by RNAs having enough uridines. Its function is as follows. Endosomal receptor that plays a key role in innate and adaptive immunity. Controls host immune response against pathogens through recognition of RNA degradation products specific to microorganisms that are initially processed by RNASET2. Recognizes GU-rich single-stranded RNA (GU-rich RNA) derived from SARS-CoV-2, SARS-CoV-1 and HIV-1 viruses. Upon binding to agonists, undergoes dimerization that brings TIR domains from the two molecules into direct contact, leading to the recruitment of TIR-containing downstream adapter MYD88 through homotypic interaction. In turn, the Myddosome signaling complex is formed involving IRAK4, IRAK1, TRAF6, TRAF3 leading to activation of downstream transcription factors NF-kappa-B and IRF7 to induce pro-inflammatory cytokines and interferons, respectively. This Homo sapiens (Human) protein is Toll-like receptor 8.